Here is a 687-residue protein sequence, read N- to C-terminus: Adhesion G-protein coupled receptor G1 (687 aa).

The signal sequence occupies residues 1–25 (MTAQSLLQTTLFLLSLLFLVQGAHG). 26 to 33 (RGHREDFR) lines the heparin pocket. The Extracellular portion of the chain corresponds to 26–402 (RGHREDFRFC…VEVDAVHKHY (377 aa)). 2 disulfides stabilise this stretch: Cys-35–Cys-91 and Cys-121–Cys-177. Asn-39, Asn-148, and Asn-171 each carry an N-linked (GlcNAc...) asparagine glycan. 190-200 (LKHPQKASRRP) lines the heparin pocket. One can recognise a GAIN-B domain in the interval 224–395 (DTVSFEEDRI…AVLMVSSVEV (172 aa)). 4 N-linked (GlcNAc...) asparagine glycosylation sites follow: Asn-234, Asn-303, Asn-324, and Asn-341. Intrachain disulfides connect Cys-346-Cys-377 and Cys-366-Cys-379. Residues 346–395 (CVFWVEDPTLSSPGHWSSAGCETVRRETQTSCFCNHLTYFAVLMVSSVEV) are GPS. Positions 384–397 (YFAVLMVSSVEVDA) are stachel. The chain crosses the membrane as a helical span at residues 403 to 423 (LSLLSYVGCVVSALACIVTIA). Residues 424 to 442 (AYLCSRRKPRDYTIKVHMN) lie on the Cytoplasmic side of the membrane. A helical membrane pass occupies residues 443-463 (LLLAVFLLDTSFLLSEPVALT). The Extracellular segment spans residues 464 to 470 (GSEAGCR). A helical membrane pass occupies residues 471 to 491 (ASAIFLHFSLLACLSWMGLEG). The Cytoplasmic segment spans residues 492 to 512 (YNLYRLVVEVFGTYVPGYLLK). A helical transmembrane segment spans residues 513-533 (LSAMGWGFPIFLVTLVALVDV). Topologically, residues 534–570 (DNYGPIILAVHRTPEGVIYPSMCWIRDSLVSYITNLG) are extracellular. The helical transmembrane segment at 571-591 (LFSLVFLFNMAMLATMVVQIL) threads the bilayer. At 592–603 (RLRPHTQKWSHV) the chain is on the cytoplasmic side. The helical transmembrane segment at 604-624 (LTLLGLSLVLGLPWALIFFSF) threads the bilayer. The Extracellular portion of the chain corresponds to 625–630 (ASGTFQ). A helical transmembrane segment spans residues 631-651 (LVVLYLFSIITSFQGFLIFIW). Topologically, residues 652 to 687 (YWSMRLQARGGPSPLKSNSDSARLPISSGSTSSSRI) are cytoplasmic. The tract at residues 664 to 687 (SPLKSNSDSARLPISSGSTSSSRI) is disordered. The segment covering 678 to 687 (SSGSTSSSRI) has biased composition (low complexity).

It belongs to the G-protein coupled receptor 2 family. LN-TM7 subfamily. Heterodimer of 2 chains generated by proteolytic processing; the large extracellular N-terminal fragment (ADGRG1 NT) and the membrane-bound C-terminal fragment (ADGRG1-CT) predominantly remain associated and non-covalently linked. ADGRG1 NT self-associates in a trans-trans manner; the homophilic interaction enhances receptor signaling. Interacts with TGM2. Interacts with heparin; leading to the reduction of ADGRG1 shedding. Interacts with COL3A1. Part of a GPCR-tetraspanin complex at least consisting of ADGRG1, CD81, eventually CD9, and GNA11 in which CD81 is enhancing the association of ADGRG1 with GNA11. Post-translationally, autoproteolytically cleaved into 2 fragments; the large extracellular N-terminal fragment (ADGRG1 NT) and the membrane-bound C-terminal fragment (ADGRG1 CT) predominantly remain associated and non-covalently linked. Shedding to yield the secreted ADGRG1 N-terminal fragment seems to involve metalloprotease(s). Ubiquitinated. Undergoes polyubiquitination upon activation.

The protein resides in the cell membrane. The protein localises to the secreted. It is found in the membrane raft. Its activity is regulated as follows. Forms a heterodimer of 2 chains generated by proteolytic processing that remain associated through non-covalent interactions mediated by the GAIN-B domain. In the inactivated receptor, the Stachel sequence (also named stalk) is embedded in the GAIN-B domain, where it adopts a beta-strand conformation. On activation, the Stachel moves into the 7 transmembrane region and adopts a twisted hook-shaped configuration that forms contacts within the receptor, leading to coupling of a G-alpha protein, which activates signaling. The cleaved GAIN-B and N-terminal domains can then dissociate from the rest of the receptor. In terms of biological role, adhesion G-protein coupled receptor (aGPCR) for steroid hormone 17alpha-hydroxypregnenolone (17-OH), which is involved in cell adhesion and cell-cell interactions. Ligand binding causes a conformation change that triggers signaling via guanine nucleotide-binding proteins (G proteins) and modulates the activity of downstream effectors, such as RhoA pathway. ADGRG1 is coupled to G(12) and/or G(13) G proteins (GNA12 and GNA13, respectively) and mediates the activation Rho small GTPases. Acts as a potent suppressor of ferroptosis: binding to 17-OH-binding initiates signaling that down-regulates CD36 and alleviates ferroptosis-induced liver injury. Ligand-binding also induces cell adhesion activity via association with proteins such as collagen III/COL3A1 and TGM2. Mediates cell matrix adhesion in developing neurons and hematopoietic stem cells. Involved in cortical development, specifically in maintenance of the pial basement membrane integrity and in cortical lamination: association with COL3A1 in the developing brain inhibits neuronal migration via activation of the RhoA pathway. Together with TGM2, acts as a regulator of myelination and myelin repair in oligodendrocyte precursor cells. Acts as a hemostatic sensor of shear force: G protein-coupled receptor signaling is activated in response to shear force in platelets, promoting G(13) G protein signaling, and platelet shape change and aggregation in a COL3A1-dependent manner. Acts as an inhibitor of VEGFA production thereby inhibiting angiogenesis through a signaling pathway mediated by PRKCA. Plays a role in the maintenance of hematopoietic stem cells in bone marrow niche. Plays an essential role in testis development. The sequence is that of Adhesion G-protein coupled receptor G1 (ADGRG1) from Gorilla gorilla gorilla (Western lowland gorilla).